The sequence spans 309 residues: MIKIYAPASVANVGVGFDILGAAIIPINGTLLGDCVTVKLSKKFELINKGIFSNKLPINKEQNIVWKCWFKFCKVIKKNIPVSIILEKNMPIGSGLGSSACSVVATLVAINQICNNPLNSKELLLLMGEIEGEISGSIHYDNVAPSYLGGLQLILEDSDIISQKIPNFKHWFWIIAWPGIKVSTAEARKILPKEYKKDICIKNSRYLAGFIHASYTKQSHLAARCMQDFIAEPYRSKLLPNFLNAKEKIKKIGAISCGISGSGPTIFAISDKIKTAEKISLWLKNNYLQNKTGFVHICAVDVKGVRKIG.

91–101 (PIGSGLGSSAC) provides a ligand contact to ATP.

The protein belongs to the GHMP kinase family. Homoserine kinase subfamily.

The protein localises to the cytoplasm. The enzyme catalyses L-homoserine + ATP = O-phospho-L-homoserine + ADP + H(+). The protein operates within amino-acid biosynthesis; L-threonine biosynthesis; L-threonine from L-aspartate: step 4/5. Its function is as follows. Catalyzes the ATP-dependent phosphorylation of L-homoserine to L-homoserine phosphate. The polypeptide is Homoserine kinase (Buchnera aphidicola subsp. Schizaphis graminum (strain Sg)).